Consider the following 274-residue polypeptide: Large ribosomal subunit protein uL2 (274 aa).

Residues V220–F265 are disordered. A compositionally biased stretch (basic and acidic residues) spans P227 to A239. The segment covering K249 to N262 has biased composition (basic residues).

It belongs to the universal ribosomal protein uL2 family. As to quaternary structure, part of the 50S ribosomal subunit. Forms a bridge to the 30S subunit in the 70S ribosome.

Its function is as follows. One of the primary rRNA binding proteins. Required for association of the 30S and 50S subunits to form the 70S ribosome, for tRNA binding and peptide bond formation. It has been suggested to have peptidyltransferase activity; this is somewhat controversial. Makes several contacts with the 16S rRNA in the 70S ribosome. The sequence is that of Large ribosomal subunit protein uL2 from Chloroflexus aurantiacus (strain ATCC 29364 / DSM 637 / Y-400-fl).